The following is a 391-amino-acid chain: MIPYKGKYHFTSESVTEGHPDKVADQISDAVLDVLLEQDPDSRVACETMVTTGMAIIAGEITTRGYADLPQVVRDTIKEIGYNNSSMGFDWQTCAVLSSIDKQSPDIAQGVDRQDPENQGAGDQGMMFGFACDETPTLMPAPIFWAHQLSQKLTAVRKDGTVDFLRPDGKTQVSFEYVDGRPVRINNVVVSTQHAEQASQTDIIDAIRTHVIRPVLEPSGFFNEKDCEIFINTTGRFVIGGPMGDCGLTGRKIIQDTYGGMGSHGGGAFSGKDPSKVDRSGAYMGRYIAKNVVAAGLAPKCEVQIAYCIGVADPVSVLCTSLGSSDISDEVLTQAVRDVFDLRPYHISKRLDLRRPIYKKSACYGHFGREIPEFSWERTDAVDDLRAAARR.

Histidine 19 lines the ATP pocket. Residue aspartate 21 coordinates Mg(2+). Glutamate 47 is a binding site for K(+). L-methionine contacts are provided by glutamate 60 and glutamine 103. Residues 103-113 (QSPDIAQGVDR) form a flexible loop region. ATP contacts are provided by residues 168–170 (DGK), 236–237 (RF), aspartate 245, 251–252 (RK), alanine 268, and lysine 272. Position 245 (aspartate 245) interacts with L-methionine. Lysine 276 contributes to the L-methionine binding site.

The protein belongs to the AdoMet synthase family. Homotetramer; dimer of dimers. It depends on Mg(2+) as a cofactor. The cofactor is K(+).

It localises to the cytoplasm. The enzyme catalyses L-methionine + ATP + H2O = S-adenosyl-L-methionine + phosphate + diphosphate. Its pathway is amino-acid biosynthesis; S-adenosyl-L-methionine biosynthesis; S-adenosyl-L-methionine from L-methionine: step 1/1. In terms of biological role, catalyzes the formation of S-adenosylmethionine (AdoMet) from methionine and ATP. The overall synthetic reaction is composed of two sequential steps, AdoMet formation and the subsequent tripolyphosphate hydrolysis which occurs prior to release of AdoMet from the enzyme. The polypeptide is S-adenosylmethionine synthase (Oleidesulfovibrio alaskensis (strain ATCC BAA-1058 / DSM 17464 / G20) (Desulfovibrio alaskensis)).